Consider the following 169-residue polypeptide: S-ribosylhomocysteine lyase (169 aa).

Residues His-54, His-58, and Cys-128 each contribute to the Fe cation site.

Belongs to the LuxS family. As to quaternary structure, homodimer. Requires Fe cation as cofactor.

The enzyme catalyses S-(5-deoxy-D-ribos-5-yl)-L-homocysteine = (S)-4,5-dihydroxypentane-2,3-dione + L-homocysteine. Functionally, involved in the synthesis of autoinducer 2 (AI-2) which is secreted by bacteria and is used to communicate both the cell density and the metabolic potential of the environment. The regulation of gene expression in response to changes in cell density is called quorum sensing. Catalyzes the transformation of S-ribosylhomocysteine (RHC) to homocysteine (HC) and 4,5-dihydroxy-2,3-pentadione (DPD). The protein is S-ribosylhomocysteine lyase of Shewanella sediminis (strain HAW-EB3).